We begin with the raw amino-acid sequence, 351 residues long: MPSETLWEIAKAEVEKRGSSENEGDGAEIGEKSVFFIGSKNGGKTTIILRCLDRDEPPKPTLALEYTYGRRTKGHNIPKDIAHFWELGGGTSLLDLISIPITSDTLRTFSIVLVLDLSKPNDLWPTMENLLQATKLNIDKVIMKLGKKNSKAASEMRQKMWSNMQKDHPDRELLDPFPIPLVIIGSKYDIFQDFDSEKRKVICKTLRFVAHYYGASLMFTSKSEALLLKIRGVINQLAFGINKSKSICVDQNKPLFITAGLDSLSQIGPPPLPDNDIGKLHARSPMDLWKKVYEKLFPPKSINTLKDVKDPAKDPQYAESEVDEMRIQKDQELEQYKRSSSKSWKQIELDS.

Residues 304–351 (TLKDVKDPAKDPQYAESEVDEMRIQKDQELEQYKRSSSKSWKQIELDS) form a disordered region. The span at 323-337 (DEMRIQKDQELEQYK) shows a compositional bias: basic and acidic residues.

It belongs to the dynein light intermediate chain family. Light intermediate chain of the cytoplasmic dynein complex 2, a multisubunit complex composed at least of eleven different proteins. The cytoplasmic dynein 2 complex consists of two catalytic heavy chains (HCs) and a number of non-catalytic subunits presented by intermediate chains (ICs), light intermediate chains (LICs) and light chains (LCs). Among them, a heavy chain (DYNC2H1), two intermediate chains (DYNC2I2 and DYNC2I1), a light intermediate chain (DYNC2LI1), and a light chain (DYNLT2B) are unique to the dynein-2 complex, but a subset of light chains are also shared by dynein-1 and dynein-2 complexes. Dynein-2 complex is built around two copies of cytoplasmic dynein 2 heavy chain 1 (DYNC2H1). The C-terminal region forms the motor domain, which converts the energy from ATP hydrolysis into movement. Its N-terminal region forms the tail, an extended structure that binds the other subunits and holds the two heavy chains in a homodimer. Interacts with DYNC2H1 (via N-terminus); this interaction stabilizes the dynein-2 complex structure.

It localises to the cytoplasm. Its subcellular location is the cell projection. The protein localises to the cilium. It is found in the cytoskeleton. The protein resides in the cilium basal body. It localises to the cilium axoneme. Its subcellular location is the microtubule organizing center. The protein localises to the centrosome. In terms of biological role, acts as one of several non-catalytic accessory components of the cytoplasmic dynein 2 complex (dynein-2 complex), a motor protein complex that drives the movement of cargos along microtubules within cilia and flagella in concert with the intraflagellar transport (IFT) system, facilitating the assembly of these organelles. Involved in the regulation of ciliary length. This Bos taurus (Bovine) protein is Cytoplasmic dynein 2 light intermediate chain 1 (DYNC2LI1).